A 195-amino-acid chain; its full sequence is Nucleoside triphosphate pyrophosphatase (195 aa).

Aspartate 70 serves as the catalytic Proton acceptor.

Belongs to the Maf family. Requires a divalent metal cation as cofactor.

Its subcellular location is the cytoplasm. The enzyme catalyses a ribonucleoside 5'-triphosphate + H2O = a ribonucleoside 5'-phosphate + diphosphate + H(+). It carries out the reaction a 2'-deoxyribonucleoside 5'-triphosphate + H2O = a 2'-deoxyribonucleoside 5'-phosphate + diphosphate + H(+). Its function is as follows. Nucleoside triphosphate pyrophosphatase. May have a dual role in cell division arrest and in preventing the incorporation of modified nucleotides into cellular nucleic acids. This is Nucleoside triphosphate pyrophosphatase from Cyanothece sp. (strain PCC 7425 / ATCC 29141).